A 67-amino-acid polypeptide reads, in one-letter code: Excisionase from transposon Tn916 (67 aa).

In Streptococcus agalactiae serotype V (strain ATCC BAA-611 / 2603 V/R), this protein is Excisionase from transposon Tn916 (xis).